We begin with the raw amino-acid sequence, 125 residues long: Calcitonin receptor-stimulating peptide 3 (125 aa).

An N-terminal signal peptide occupies residues 1-25 (MGFWKFPPFLILSILVLYQAGMLHA). Residues 26–79 (APFRMALGSSFDSATLTEEEMSLLLVAMVKDYVQMKATVLEQETEDFSITTQER) constitute a propeptide that is removed on maturation. A disulfide bridge connects residues cysteine 81 and cysteine 86. Leucine 116 carries the leucine amide modification. Residues 122-125 (QPQA) constitute a propeptide that is removed on maturation.

Belongs to the calcitonin family. As to expression, mainly expressed in the thyroid gland and CNS. Found in the nerve cells of cerebrum, hippocampus, hypothalamus, pons/midbrain and thalamus.

Its subcellular location is the secreted. The polypeptide is Calcitonin receptor-stimulating peptide 3 (CRSP3) (Sus scrofa (Pig)).